A 371-amino-acid chain; its full sequence is Opine oxidase subunit B (371 aa).

Heterodimer of a subunit A and a subunit B.

It functions in the pathway opine metabolism; octopine degradation. In terms of biological role, oxidative cleavage of octopine into L-arginine and pyruvate. This is Opine oxidase subunit B (ooxB) from Rhizobium meliloti (Ensifer meliloti).